The following is a 712-amino-acid chain: Polyribonucleotide nucleotidyltransferase (712 aa).

Mg(2+) contacts are provided by Asp485 and Asp491. The KH domain occupies 552 to 611 (PKITTISVPKEKIRDVIGQGGKVIREIVEYSGAKIDINDDGTIMIAASSEDQATRAIERI). Residues 621 to 689 (GAIYTGKVVK…DRGKVKLSMR (69 aa)) enclose the S1 motif domain.

It belongs to the polyribonucleotide nucleotidyltransferase family. Requires Mg(2+) as cofactor.

It is found in the cytoplasm. It catalyses the reaction RNA(n+1) + phosphate = RNA(n) + a ribonucleoside 5'-diphosphate. Its function is as follows. Involved in mRNA degradation. Catalyzes the phosphorolysis of single-stranded polyribonucleotides processively in the 3'- to 5'-direction. This chain is Polyribonucleotide nucleotidyltransferase, found in Gluconacetobacter diazotrophicus (strain ATCC 49037 / DSM 5601 / CCUG 37298 / CIP 103539 / LMG 7603 / PAl5).